Consider the following 173-residue polypeptide: Bifunctional protein PyrR (173 aa).

The PRPP-binding motif lies at Val93–Thr105.

This sequence belongs to the purine/pyrimidine phosphoribosyltransferase family. PyrR subfamily. As to quaternary structure, homodimer and homohexamer; in equilibrium.

It carries out the reaction UMP + diphosphate = 5-phospho-alpha-D-ribose 1-diphosphate + uracil. Regulates transcriptional attenuation of the pyrimidine nucleotide (pyr) operon by binding in a uridine-dependent manner to specific sites on pyr mRNA. This disrupts an antiterminator hairpin in the RNA and favors formation of a downstream transcription terminator, leading to a reduced expression of downstream genes. Functionally, also displays a weak uracil phosphoribosyltransferase activity which is not physiologically significant. The protein is Bifunctional protein PyrR of Streptococcus uberis (strain ATCC BAA-854 / 0140J).